The primary structure comprises 1393 residues: DNA-directed RNA polymerase subunit beta' (1393 aa).

Zn(2+) is bound by residues Cys-72, Cys-74, Cys-87, and Cys-90. 3 residues coordinate Mg(2+): Asp-463, Asp-465, and Asp-467. The Zn(2+) site is built by Cys-812, Cys-887, Cys-894, and Cys-897.

This sequence belongs to the RNA polymerase beta' chain family. As to quaternary structure, the RNAP catalytic core consists of 2 alpha, 1 beta, 1 beta' and 1 omega subunit. When a sigma factor is associated with the core the holoenzyme is formed, which can initiate transcription. It depends on Mg(2+) as a cofactor. The cofactor is Zn(2+).

The enzyme catalyses RNA(n) + a ribonucleoside 5'-triphosphate = RNA(n+1) + diphosphate. DNA-dependent RNA polymerase catalyzes the transcription of DNA into RNA using the four ribonucleoside triphosphates as substrates. In Chlamydia caviae (strain ATCC VR-813 / DSM 19441 / 03DC25 / GPIC) (Chlamydophila caviae), this protein is DNA-directed RNA polymerase subunit beta'.